Consider the following 97-residue polypeptide: Protein Vpr (97 aa).

Residues Met1–Leu42 are homooligomerization. Residues Ser79, Ser95, and Ser97 each carry the phosphoserine; by host modification.

The protein belongs to the HIV-1 VPR protein family. In terms of assembly, homooligomer, may form homodimer. Interacts with p6-gag region of the Pr55 Gag precursor protein through a (Leu-X-X)4 motif near the C-terminus of the P6gag protein. Interacts with host UNG. May interact with host RAD23A/HHR23A. Interacts with host VPRBP/DCAF1, leading to hijack the CUL4A-RBX1-DDB1-DCAF1/VPRBP complex, mediating ubiquitination of host proteins such as TERT and ZGPAT and arrest of the cell cycle in G2 phase. Phosphorylated on several residues by host. These phosphorylations regulate VPR activity for the nuclear import of the HIV-1 pre-integration complex.

The protein resides in the virion. The protein localises to the host nucleus. Its subcellular location is the host extracellular space. In terms of biological role, during virus replication, may deplete host UNG protein, and incude G2-M cell cycle arrest. Acts by targeting specific host proteins for degradation by the 26S proteasome, through association with the cellular CUL4A-DDB1 E3 ligase complex by direct interaction with host VPRPB/DCAF-1. Cell cycle arrest reportedly occurs within hours of infection and is not blocked by antiviral agents, suggesting that it is initiated by the VPR carried into the virion. Additionally, VPR induces apoptosis in a cell cycle dependent manner suggesting that these two effects are mechanistically linked. Detected in the serum and cerebrospinal fluid of AIDS patient, VPR may also induce cell death to bystander cells. Its function is as follows. During virus entry, plays a role in the transport of the viral pre-integration (PIC) complex to the host nucleus. This function is crucial for viral infection of non-dividing macrophages. May act directly at the nuclear pore complex, by binding nucleoporins phenylalanine-glycine (FG)-repeat regions. In Human immunodeficiency virus type 1 group M subtype B (isolate YU-2) (HIV-1), this protein is Protein Vpr.